A 537-amino-acid chain; its full sequence is tRNA(His) guanylyltransferase 2 (537 aa).

Residues Asp307, Gly308, and Asp354 each contribute to the Mg(2+) site. Residues 307–312 (DGCHFH) and 353–354 (SD) contribute to the GTP site.

Belongs to the tRNA(His) guanylyltransferase family. Mg(2+) serves as cofactor.

It localises to the nucleus. The protein resides in the nucleoplasm. The enzyme catalyses a 5'-end ribonucleotide-tRNA(His) + GTP + ATP + H2O = a 5'-end phospho-guanosine-ribonucleotide-tRNA(His) + AMP + 2 diphosphate + H(+). In terms of biological role, adds a GMP to the 5'-end of tRNA(His) after transcription and RNase P cleavage. The protein is tRNA(His) guanylyltransferase 2 (THG2) of Arabidopsis thaliana (Mouse-ear cress).